Here is a 247-residue protein sequence, read N- to C-terminus: Probable dihydroorotate dehydrogenase B (NAD(+)), electron transfer subunit (247 aa).

Residues 1 to 87 (MLRRVMIKET…RGPYGNGFKS (87 aa)) form the FAD-binding FR-type domain. [2Fe-2S] cluster-binding residues include Cys-200, Cys-205, Cys-208, and Cys-216.

This sequence belongs to the PyrK family. In terms of assembly, heterotetramer of 2 PyrK and 2 PyrD type B subunits. The cofactor is [2Fe-2S] cluster. FAD serves as cofactor.

The protein operates within pyrimidine metabolism; UMP biosynthesis via de novo pathway; orotate from (S)-dihydroorotate (NAD(+) route): step 1/1. Functionally, responsible for channeling the electrons from the oxidation of dihydroorotate from the FMN redox center in the PyrD type B subunit to the ultimate electron acceptor NAD(+). This chain is Probable dihydroorotate dehydrogenase B (NAD(+)), electron transfer subunit, found in Pyrococcus abyssi (strain GE5 / Orsay).